Reading from the N-terminus, the 290-residue chain is Protease HtpX (290 aa).

2 helical membrane passes run 4 to 24 (IFLF…TLKL) and 36 to 56 (GSLL…SLFI). Residue histidine 142 participates in Zn(2+) binding. Residue glutamate 143 is part of the active site. Position 146 (histidine 146) interacts with Zn(2+). Helical transmembrane passes span 150 to 170 (GDMV…MFFA) and 193 to 213 (FVAT…IVMW). Glutamate 219 serves as a coordination point for Zn(2+).

Belongs to the peptidase M48B family. Zn(2+) serves as cofactor.

It localises to the cell inner membrane. The chain is Protease HtpX from Stutzerimonas stutzeri (strain A1501) (Pseudomonas stutzeri).